Here is a 1799-residue protein sequence, read N- to C-terminus: 1,3-beta-glucan synthase component FKS1 (1799 aa).

Positions 1–11 (MSYPNPPPPPK) are enriched in pro residues. Residues 1–136 (MSYPNPPPPP…SNAGHRPRDP (136 aa)) are disordered. The segment covering 12 to 23 (GSASFSSSSSDP) has biased composition (low complexity). Positions 51–64 (GAGGAGVAPPGQGG) are enriched in gly residues. The segment covering 91–101 (ASESGWSQNEP) has biased composition (polar residues). 16 helical membrane passes run 431 to 451 (IWVL…PSIY), 470 to 490 (LGGF…FSYI), 504 to 524 (LIFL…IAFF), 530 to 550 (VALI…IAFA), 591 to 611 (FLLW…FLTL), 648 to 668 (VMFV…YVIW), 1268 to 1288 (NILV…LGTL), 1323 to 1343 (CIIS…VQEL), 1422 to 1442 (LVLL…YFWI), 1446 to 1466 (GLCV…DFII), 1527 to 1547 (IGEI…YLFI), 1563 to 1583 (IAII…TLFL), 1605 to 1625 (ALAH…LWFL), 1635 to 1655 (LGII…IAVF), 1704 to 1724 (DFIA…IPYF), and 1762 to 1782 (GLLY…PIIF).

The protein belongs to the glycosyltransferase 48 family. As to quaternary structure, component of the 1,3-beta-glucan synthase (GS) complex composed of a catalytic subunit FKS1 and a regulatory subunit RHO1.

The protein localises to the cell membrane. The enzyme catalyses [(1-&gt;3)-beta-D-glucosyl](n) + UDP-alpha-D-glucose = [(1-&gt;3)-beta-D-glucosyl](n+1) + UDP + H(+). Its activity is regulated as follows. Activated by magnesium ions. Inhibited by caspofungin and cilofungin. Functionally, catalytic subunit of the 1,3-beta-glucan synthase (GS) complex. Synthesizes 1,3-beta-glucan, a major structural component of the yeast cell wall. Involved in cell wall synthesis, maintenance and remodeling. The sequence is that of 1,3-beta-glucan synthase component FKS1 from Cryptococcus neoformans var. grubii serotype A (strain H99 / ATCC 208821 / CBS 10515 / FGSC 9487) (Filobasidiella neoformans var. grubii).